The chain runs to 149 residues: MRYNEKELQALSRQPAEMAAELGMRGPKKGSVLKRRLVKLVVNFLFYFRTDEAEPVGALLLERCRVVREEPGTFSISFIEDPERKYHFECSSEEQCQEWMEALRRASYEFMRRSLIFYRNEIRKVTGKDPLEQFGISEEARFQLSGLQA.

The PH domain occupies 15–108 (PAEMAAELGM…WMEALRRASY (94 aa)).

Expressed in testis and liver.

The sequence is that of Pleckstrin homology domain-containing family J member 1 (PLEKHJ1) from Homo sapiens (Human).